The sequence spans 561 residues: uncharacterized protein (561 aa).

The next 6 helical transmembrane spans lie at L10–I29, F34–G56, L63–G80, V95–H117, L122–L144, and G164–W186. RCK C-terminal domains lie at Q205–E287 and H294–S376. The next 5 helical transmembrane spans lie at L386–V403, G407–Y429, A442–G464, F479–L501, and S538–F560.

It belongs to the AAE transporter (TC 2.A.81) family.

The protein localises to the cell membrane. This is an uncharacterized protein from Zymomonas mobilis subsp. mobilis (strain ATCC 31821 / ZM4 / CP4).